The sequence spans 396 residues: Cathepsin E (396 aa).

Positions 1 to 19 are cleaved as a signal peptide; it reads MKTLPLLLLLLLDLGQAQG. Residues 20–53 constitute a propeptide, activation peptide; it reads TLDRVPLRRQPSLRKKLRAQGQLSEFWKAHKVDM. Residues 78–392 enclose the Peptidase A1 domain; that stretch reads YFGTISIGSP…DRGSNRVGLA (315 aa). N90 is a glycosylation site (N-linked (GlcNAc...) asparagine). Residue D96 is part of the active site. 2 disulfides stabilise this stretch: C109-C114 and C272-C276. The active site involves D281. An intrachain disulfide couples C314 to C351.

Belongs to the peptidase A1 family. In terms of assembly, homodimer; disulfide-linked. Glycosylated. The nature of the carbohydrate chain varies between cell types.

The protein resides in the endosome. It catalyses the reaction Similar to cathepsin D, but slightly broader specificity.. May have a role in immune function. Probably involved in the processing of antigenic peptides during MHC class II-mediated antigen presentation. May play a role in activation-induced lymphocyte depletion in the thymus, and in neuronal degeneration and glial cell activation in the brain. This chain is Cathepsin E (CTSE), found in Oryctolagus cuniculus (Rabbit).